Consider the following 642-residue polypeptide: Zinc finger protein 14 (642 aa).

Residues 4–76 (VSFEDVAVNF…MVERLCESRK (73 aa)) enclose the KRAB domain. The tract at residues 77–99 (GSKCGETTSQMPNVNINKETSTG) is disordered. Over residues 81 to 99 (GETTSQMPNVNINKETSTG) the composition is skewed to polar residues. The C2H2-type 1 zinc-finger motif lies at 103-125 (HECSFCGKDFMHHSSLNRHMRSH). The C2H2-type 2; degenerate zinc finger occupies 141–163 (CKRKAVGKTFSYRHCVRKHERTH). Residues 169–191 (YECKQCGKAFIYYQPFQRHERIH) form a C2H2-type 3 zinc finger. The C2H2-type 4; atypical zinc finger occupies 197-217 (YECKQCGKTFIYYQSFQKHAH). 15 consecutive C2H2-type zinc fingers follow at residues 223–245 (YECK…ERTH), 251–273 (YECK…ERTH), 279–301 (YKCK…KRTH), 307–329 (YECK…VITH), 335–357 (YKCK…ERTH), 363–385 (YECK…ERTH), 391–413 (YECK…ETTH), 419–441 (YECK…ERTH), 447–469 (YECK…ERSH), 475–497 (YECK…ERTH), 503–525 (YECK…EKIH), 531–553 (FECK…ERTH), 559–581 (YQCK…ERTH), 587–609 (YRCK…ERSH), and 615–637 (YECK…ERTH).

Belongs to the krueppel C2H2-type zinc-finger protein family.

Its subcellular location is the nucleus. Its function is as follows. May be involved in transcriptional regulation. The polypeptide is Zinc finger protein 14 (ZNF14) (Macaca fascicularis (Crab-eating macaque)).